A 154-amino-acid chain; its full sequence is Putative nuclear shuttle protein (154 aa).

This sequence belongs to the nanoviridae nuclear shuttle protein family.

The protein localises to the host nucleus. Its subcellular location is the host cytoplasm. Its function is as follows. Putative nuclear shuttle protein. This Musa (BBTV) protein is Putative nuclear shuttle protein (DNA-N).